Here is a 408-residue protein sequence, read N- to C-terminus: MITINENYLKLQASYLFSDIAKRVATFQEENPEKEVIKLGIGDVTRGLTPSVIAAFHQAVDEMANDSTFHGYGPEQGYAFLREAIAENDFQSRGAGIVADEIFVSDGAKCDTSNIQEIFSAETKIAIPDPVYPVYLDTNVMAGRTGLFADGRYQNIVYLDSTKENNFVPELPTEKVDLIYLCFPNNPTGSTITKAGLKRWVDYAIENKALILFDAAYEAFIQDDTLPKSIYEIEGADKVAIEFRSFSKNAGFTGTRCAYTVVPKACMAYDSEGNSHSLHSMWNRRHCTKFNGVSYPIQRAAAATYTPEGKAECKELIDYYMANAKVVXSNHDKLGYSYVGGENSPYIWIDGKTDSWEFFDMLLSKAGVVCTPGAGFGTCCGNGYIRISAFNSPENIEKAMARITEALS.

Residues Y15 and G42 each contribute to the substrate site. Pyridoxal 5'-phosphate is bound by residues Y72, A108–K109, Y132, N186, Y217, and S245–S247. Residues K109, Y132, and N186 each coordinate substrate. K248 carries the N6-(pyridoxal phosphate)lysine modification. Pyridoxal 5'-phosphate-binding residues include R256 and N291. Substrate-binding residues include N291 and R386.

Belongs to the class-I pyridoxal-phosphate-dependent aminotransferase family. LL-diaminopimelate aminotransferase subfamily. Homodimer. Requires pyridoxal 5'-phosphate as cofactor.

It carries out the reaction (2S,6S)-2,6-diaminopimelate + 2-oxoglutarate = (S)-2,3,4,5-tetrahydrodipicolinate + L-glutamate + H2O + H(+). The protein operates within amino-acid biosynthesis; L-lysine biosynthesis via DAP pathway; LL-2,6-diaminopimelate from (S)-tetrahydrodipicolinate (aminotransferase route): step 1/1. Its function is as follows. Involved in the synthesis of meso-diaminopimelate (m-DAP or DL-DAP), required for both lysine and peptidoglycan biosynthesis. Catalyzes the direct conversion of tetrahydrodipicolinate to LL-diaminopimelate. The sequence is that of LL-diaminopimelate aminotransferase from Desulfotalea psychrophila (strain LSv54 / DSM 12343).